Here is a 584-residue protein sequence, read N- to C-terminus: MADYNTLYHQGLYLSPDQQDLLLAALSSNQPPQKQQNDKQRSQAKTDPDSTPGNMSSGSFSMSPGFNKTHPGSGGLGYGDDESPFLDFNPELDFDFPGSENLIGDLPGSLPSEEHEVGEKRKDMSDNENEESGKKRRESDDKAAKKPGRKPLTSEPTSKRKAQNRAAQRAFRERKEKHLKDLETKVDELQKASDDANQENGLLRAQVERLQVELREYRKRLSWLTTGSGISAMSAIPSAHSRNLYGLNNNDFMFDFPKFGDLPGGHIFNGPLTKSNQNKPRDGSSPATSDSQVPGVMTRETLNGSNNRGMPTAKAANGVSNNPSPKVPSVYNIRQSASSHDSSNSCSPSSSSDSHQSQMLSSNGTSPEPSSNSPATKLNDSVQNHHACTYSTIDGEASFCAQLGMACGNINNPIPAVRGKSESVSNTPSQPNNNYEQTPGPGLDLLAQQNGGQFDPVLFGDWREPQDAILSQDFGTFFDDAFPLPDLGSPSHNFNEVANPQPPKKDLIAEIDNKLDEEVVPGEDKSQMLSCTKIWDRLQSMEKFRNGEIDVDNLCSELRTKARCSEGGVVVNQKDVEDIMGRVK.

A disordered region spans residues 23–179 (LAALSSNQPP…AFRERKEKHL (157 aa)). The Bipartite nuclear localization signal signature appears at 35–42 (QQNDKQRS). The span at 36–48 (QNDKQRSQAKTDP) shows a compositional bias: basic and acidic residues. Residues 52–67 (PGNMSSGSFSMSPGFN) show a composition bias toward low complexity. The Bipartite nuclear localization signal signature appears at 68-75 (KTHPGSGG). The span at 79–94 (GDDESPFLDFNPELDF) shows a compositional bias: acidic residues. Basic and acidic residues-rich tracts occupy residues 112 to 144 (SEEHEVGEKRKDMSDNENEESGKKRRESDDKAA) and 170 to 179 (AFRERKEKHL). Positions 154 to 217 (SEPTSKRKAQ…ERLQVELREY (64 aa)) constitute a bZIP domain. Positions 159–180 (KRKAQNRAAQRAFRERKEKHLK) are basic motif. The tract at residues 182 to 189 (LETKVDEL) is leucine-zipper. Residues 211–332 (QVELREYRKR…PSPKVPSVYN (122 aa)) are transcription activation 1. 2 disordered regions span residues 267–379 (IFNG…TKLN) and 418–441 (RGKSESVSNTPSQPNNNYEQTPGP). A n-CRD region spans residues 284–296 (SSPATSDSQVPGV). Polar residues predominate over residues 300–309 (ETLNGSNNRG). Low complexity predominate over residues 336-362 (SASSHDSSNSCSPSSSSDSHQSQMLSS). Polar residues-rich tracts occupy residues 363-379 (NGTSPEPSSNSPATKLN) and 422-437 (ESVSNTPSQPNNNYEQ). Residues 377 to 480 (KLNDSVQNHH…SQDFGTFFDD (104 aa)) are transcription activation 2. Intrachain disulfides connect Cys531–Cys555, Cys531–Cys564, and Cys555–Cys564. Residues 531–564 (CTKIWDRLQSMEKFRNGEIDVDNLCSELRTKARC) are c-CRD. Residues 549-556 (IDVDNLCS) carry the Nuclear export signal motif.

Belongs to the bZIP family. YAP subfamily. In terms of processing, depending on the oxidative stress inducing agent, yap1 can undergo two distinct conformational changes, both involving disulfide bond formation, and both masking the nuclear export signal, thus abolishing nuclear export.

It localises to the nucleus. The protein localises to the cytoplasm. In terms of biological role, transcription activator involved in oxidative stress response and redox homeostasis. Regulates the transcription of genes encoding antioxidant enzymes and components of the cellular thiol-reducing pathways. May be involved in antifungal resistance to voriconazole. The chain is AP-1-like transcription factor yap1 from Aspergillus flavus (strain ATCC 200026 / FGSC A1120 / IAM 13836 / NRRL 3357 / JCM 12722 / SRRC 167).